The following is a 361-amino-acid chain: 3-dehydroquinate synthase (361 aa).

Residues 72 to 77 (SGEKEK), 130 to 131 (TT), lysine 142, and lysine 151 contribute to the NAD(+) site. Zn(2+) is bound by residues glutamate 184, histidine 247, and histidine 264.

It belongs to the sugar phosphate cyclases superfamily. Dehydroquinate synthase family. Co(2+) is required as a cofactor. Zn(2+) serves as cofactor. The cofactor is NAD(+).

It localises to the cytoplasm. It catalyses the reaction 7-phospho-2-dehydro-3-deoxy-D-arabino-heptonate = 3-dehydroquinate + phosphate. It participates in metabolic intermediate biosynthesis; chorismate biosynthesis; chorismate from D-erythrose 4-phosphate and phosphoenolpyruvate: step 2/7. In terms of biological role, catalyzes the conversion of 3-deoxy-D-arabino-heptulosonate 7-phosphate (DAHP) to dehydroquinate (DHQ). This Bacillus cereus (strain B4264) protein is 3-dehydroquinate synthase.